Here is a 1885-residue protein sequence, read N- to C-terminus: Chitin synthase 5 (1885 aa).

One can recognise a Myosin motor domain in the interval M1 to A789. Residue G99–T106 participates in ATP binding. N-linked (GlcNAc...) asparagine glycosylation is found at N219 and N429. A disordered region spans residues K601–P649. The segment covering S609–S621 has biased composition (basic residues). An actin-binding region spans residues L666 to D690. The N-linked (GlcNAc...) asparagine glycan is linked to N668. A disordered region spans residues G794–L817. A run of 2 helical transmembrane segments spans residues W894 to G914 and F929 to F949. Residues Q957–F1016 form the Cytochrome b5 heme-binding domain. N1043 and N1068 each carry an N-linked (GlcNAc...) asparagine glycan. The chain crosses the membrane as a helical span at residues I1205–L1225. N1462 and N1568 each carry an N-linked (GlcNAc...) asparagine glycan. Helical transmembrane passes span L1599–L1619, V1626–I1646, and M1653–L1673. N1759 and N1790 each carry an N-linked (GlcNAc...) asparagine glycan. Positions L1827–S1882 constitute a DEK-C domain.

In the N-terminal section; belongs to the TRAFAC class myosin-kinesin ATPase superfamily. Myosin family. This sequence in the C-terminal section; belongs to the chitin synthase family. Class V subfamily. Maximal activity requires trypsin activation, suggesting a zymogenic nature.

Its subcellular location is the cell membrane. It is found in the membrane. It carries out the reaction [(1-&gt;4)-N-acetyl-beta-D-glucosaminyl](n) + UDP-N-acetyl-alpha-D-glucosamine = [(1-&gt;4)-N-acetyl-beta-D-glucosaminyl](n+1) + UDP + H(+). In terms of biological role, polymerizes chitin, a structural polymer of the cell wall and septum, by transferring the sugar moiety of UDP-GlcNAc to the non-reducing end of the growing chitin polymer. CHS5 is required for the sustained growth at 37 degrees Celsius and is of critical importance for virulence. Especially important at infection temperatures for maintaining the cell wall integrity of developing yeast buds, elongating tips of hyphae, and random sites of expansion in sclerotic forms. The chain is Chitin synthase 5 from Exophiala dermatitidis (Black yeast-like fungus).